A 268-amino-acid chain; its full sequence is Taurine import ATP-binding protein TauB (268 aa).

An ABC transporter domain is found at 4–236 (LSIENISMRF…MGVNADLREV (233 aa)). Residue 41-48 (GPSGCGKT) participates in ATP binding.

This sequence belongs to the ABC transporter superfamily. Taurine importer (TC 3.A.1.17.1) family. In terms of assembly, the complex is composed of two ATP-binding proteins (TauB), two transmembrane proteins (TauC) and a solute-binding protein (TauA).

It localises to the cell inner membrane. The enzyme catalyses taurine(out) + ATP + H2O = taurine(in) + ADP + phosphate + H(+). Its function is as follows. Part of the ABC transporter complex TauABC involved in taurine import. Responsible for energy coupling to the transport system. In Ruegeria pomeroyi (strain ATCC 700808 / DSM 15171 / DSS-3) (Silicibacter pomeroyi), this protein is Taurine import ATP-binding protein TauB.